The chain runs to 345 residues: Selenide, water dikinase (345 aa).

C16 is a catalytic residue. ATP is bound by residues K19 and 46 to 48; that span reads TSD. Residue D49 participates in Mg(2+) binding. Residues D66, D89, and 136 to 138 each bind ATP; that span reads GHT. D89 contacts Mg(2+). Residue D224 participates in Mg(2+) binding.

The protein belongs to the selenophosphate synthase 1 family. Class I subfamily. As to quaternary structure, homodimer. Requires Mg(2+) as cofactor.

It catalyses the reaction hydrogenselenide + ATP + H2O = selenophosphate + AMP + phosphate + 2 H(+). Synthesizes selenophosphate from selenide and ATP. The polypeptide is Selenide, water dikinase (Clostridium botulinum (strain Alaska E43 / Type E3)).